Consider the following 443-residue polypeptide: Regulator of sigma E protease (443 aa).

His-21 serves as a coordination point for Zn(2+). The active site involves Glu-22. Residue His-25 participates in Zn(2+) binding. A helical transmembrane segment spans residues 98-118 (FVIIAGPLANFIFAIFAYWVI). PDZ domains are found at residues 106–185 (ANFI…SPFN) and 198–287 (NWTF…TPVR). The next 2 membrane-spanning stretches (helical) occupy residues 369–389 (LVYF…MNLF) and 423–443 (IGAA…FLRL).

Belongs to the peptidase M50B family. Interacts with RseA. Zn(2+) is required as a cofactor.

The protein localises to the cell inner membrane. Functionally, a site-2 regulated intramembrane protease (S2P) that cleaves a peptide bond in the transmembrane region of RseA. Part of a regulated intramembrane proteolysis (RIP) cascade. Acts on DegS-cleaved RseA to release the cytoplasmic domain of RseA. This provides the cell with sigma-E (RpoE) activity through the proteolysis of RseA. The polypeptide is Regulator of sigma E protease (rsep) (Haemophilus influenzae (strain ATCC 51907 / DSM 11121 / KW20 / Rd)).